The primary structure comprises 192 residues: UPF0312 protein Pput_4854 (192 aa).

Residues M1–A23 form the signal peptide.

This sequence belongs to the UPF0312 family. Type 1 subfamily.

The protein localises to the periplasm. The sequence is that of UPF0312 protein Pput_4854 from Pseudomonas putida (strain ATCC 700007 / DSM 6899 / JCM 31910 / BCRC 17059 / LMG 24140 / F1).